A 297-amino-acid polypeptide reads, in one-letter code: 1D-myo-inositol 2-acetamido-2-deoxy-alpha-D-glucopyranoside deacetylase (297 aa).

Zn(2+)-binding residues include H14, D17, and H149.

Belongs to the MshB deacetylase family. Requires Zn(2+) as cofactor.

It carries out the reaction 1D-myo-inositol 2-acetamido-2-deoxy-alpha-D-glucopyranoside + H2O = 1D-myo-inositol 2-amino-2-deoxy-alpha-D-glucopyranoside + acetate. Functionally, catalyzes the deacetylation of 1D-myo-inositol 2-acetamido-2-deoxy-alpha-D-glucopyranoside (GlcNAc-Ins) in the mycothiol biosynthesis pathway. In Thermomonospora curvata (strain ATCC 19995 / DSM 43183 / JCM 3096 / KCTC 9072 / NBRC 15933 / NCIMB 10081 / Henssen B9), this protein is 1D-myo-inositol 2-acetamido-2-deoxy-alpha-D-glucopyranoside deacetylase.